The sequence spans 337 residues: Phosphate acyltransferase (337 aa).

This sequence belongs to the PlsX family. As to quaternary structure, homodimer. Probably interacts with PlsY.

The protein resides in the cytoplasm. The catalysed reaction is a fatty acyl-[ACP] + phosphate = an acyl phosphate + holo-[ACP]. The protein operates within lipid metabolism; phospholipid metabolism. Functionally, catalyzes the reversible formation of acyl-phosphate (acyl-PO(4)) from acyl-[acyl-carrier-protein] (acyl-ACP). This enzyme utilizes acyl-ACP as fatty acyl donor, but not acyl-CoA. The polypeptide is Phosphate acyltransferase (Polynucleobacter necessarius subsp. necessarius (strain STIR1)).